A 240-amino-acid polypeptide reads, in one-letter code: Dihydromonapterin reductase (240 aa).

Y152 acts as the Proton acceptor in catalysis.

The protein belongs to the short-chain dehydrogenases/reductases (SDR) family. FolM subfamily.

It carries out the reaction (6S)-5,6,7,8-tetrahydrofolate + NADP(+) = 7,8-dihydrofolate + NADPH + H(+). It catalyses the reaction 7,8-dihydromonapterin + NADPH + H(+) = 5,6,7,8-tetrahydromonapterin + NADP(+). In terms of biological role, catalyzes the reduction of dihydromonapterin to tetrahydromonapterin. Also has lower activity with dihydrofolate. The polypeptide is Dihydromonapterin reductase (folM) (Escherichia coli O1:K1 / APEC).